We begin with the raw amino-acid sequence, 434 residues long: MTQMLEAMRGNITEAMKTVAADEKLDPEYIRKMVAKGYIAIPDNNQRETVAVGIGENLRTKVNATIGTSTDINDLDMELEKAKIAEEAGADTLMELSIGGDLDNIRRTVLKNTKKPVGSVPIYQTAVEAIEKDGSAINMDPDDMLKNIEKQAKDGIDFMAIHCSVNRETLKRLKRQGRNGGLVSRGGSFISSWMVHNDCENPLYENYDQVLDIVEEYDVCLSMANAMRAGALTDSTDRAQIQELIVLGELVDRARERGVQTIVEGPGHIPINEIETNINIQKKMCKNAPFYMLGPIVTDIAPAYDHIVSAIGAAQCARYGANFICYVTPAEHLALPGPEDVREGVIATRIGAHAGDLAIDLERFGEDDIAMAHARKSLNWTEQYEHAMWPADAKAIRDKRPPEADDTCTMCGNYCAIKIVNQWLDKADKDAFDN.

Substrate is bound by residues methionine 94, tyrosine 123, histidine 162, 184 to 186 (SRG), 225 to 228 (NAMR), and glutamate 264. Histidine 268 is a binding site for Zn(2+). Tyrosine 291 is a binding site for substrate. Histidine 332 contacts Zn(2+). [4Fe-4S] cluster contacts are provided by cysteine 408, cysteine 411, and cysteine 415.

It belongs to the ThiC family. Requires [4Fe-4S] cluster as cofactor.

The catalysed reaction is 5-amino-1-(5-phospho-beta-D-ribosyl)imidazole + S-adenosyl-L-methionine = 4-amino-2-methyl-5-(phosphooxymethyl)pyrimidine + CO + 5'-deoxyadenosine + formate + L-methionine + 3 H(+). The protein operates within cofactor biosynthesis; thiamine diphosphate biosynthesis. Its function is as follows. Catalyzes the synthesis of the hydroxymethylpyrimidine phosphate (HMP-P) moiety of thiamine from aminoimidazole ribotide (AIR) in a radical S-adenosyl-L-methionine (SAM)-dependent reaction. This Methanosphaera stadtmanae (strain ATCC 43021 / DSM 3091 / JCM 11832 / MCB-3) protein is Phosphomethylpyrimidine synthase 2.